A 134-amino-acid chain; its full sequence is uncharacterized protein (134 aa).

The protein localises to the cell membrane. Its function is as follows. May have a role in the regulation of NDH-1 biosynthesis. This is an uncharacterized protein from Paracoccus denitrificans.